An 84-amino-acid polypeptide reads, in one-letter code: MKVTLIAILTCAAVLVLHTTAAEELEESQLMEVGMPDTELAAVDGERLFECSVSCEIEKEGNKDCKKKKCKGGWKCKFNMCVKV.

A signal peptide spans 1-22 (MKVTLIAILTCAAVLVLHTTAA). The propeptide occupies 23-47 (EELEESQLMEVGMPDTELAAVDGER). 3 cysteine pairs are disulfide-bonded: Cys51-Cys65, Cys55-Cys76, and Cys70-Cys81.

The protein belongs to the neurotoxin 12 (Hwtx-2) family. 02 (Hwtx-2) subfamily. As to expression, expressed by the venom gland.

The protein localises to the secreted. Postsynaptic neurotoxin. In Cyriopagopus hainanus (Chinese bird spider), this protein is U4-theraphotoxin-Hhn1a.